A 299-amino-acid polypeptide reads, in one-letter code: NAD kinase (299 aa).

Asp64 (proton acceptor) is an active-site residue. Residues 64–65 (DG), 138–139 (ND), Arg149, Arg166, Asp168, 179–184 (TGYAVS), and Gln238 contribute to the NAD(+) site.

This sequence belongs to the NAD kinase family. It depends on a divalent metal cation as a cofactor.

It localises to the cytoplasm. It carries out the reaction NAD(+) + ATP = ADP + NADP(+) + H(+). Functionally, involved in the regulation of the intracellular balance of NAD and NADP, and is a key enzyme in the biosynthesis of NADP. Catalyzes specifically the phosphorylation on 2'-hydroxyl of the adenosine moiety of NAD to yield NADP. The chain is NAD kinase from Nitratidesulfovibrio vulgaris (strain ATCC 29579 / DSM 644 / CCUG 34227 / NCIMB 8303 / VKM B-1760 / Hildenborough) (Desulfovibrio vulgaris).